Here is a 37-residue protein sequence, read N- to C-terminus: Esculentin-2P (37 aa).

Cys31 and Cys37 form a disulfide bridge.

As to expression, expressed by the skin glands.

The protein resides in the secreted. Functionally, antibacterial activity against Gram-negative bacterium E.coli. The chain is Esculentin-2P from Lithobates pipiens (Northern leopard frog).